The sequence spans 403 residues: Phosphopentomutase (403 aa).

Residues Asp-13, Asp-298, His-303, Asp-339, His-340, and His-351 each coordinate Mn(2+).

This sequence belongs to the phosphopentomutase family. The cofactor is Mn(2+).

It is found in the cytoplasm. It carries out the reaction 2-deoxy-alpha-D-ribose 1-phosphate = 2-deoxy-D-ribose 5-phosphate. It catalyses the reaction alpha-D-ribose 1-phosphate = D-ribose 5-phosphate. It functions in the pathway carbohydrate degradation; 2-deoxy-D-ribose 1-phosphate degradation; D-glyceraldehyde 3-phosphate and acetaldehyde from 2-deoxy-alpha-D-ribose 1-phosphate: step 1/2. Its function is as follows. Isomerase that catalyzes the conversion of deoxy-ribose 1-phosphate (dRib-1-P) and ribose 1-phosphate (Rib-1-P) to deoxy-ribose 5-phosphate (dRib-5-P) and ribose 5-phosphate (Rib-5-P), respectively. This Streptococcus pneumoniae serotype 4 (strain ATCC BAA-334 / TIGR4) protein is Phosphopentomutase.